The chain runs to 156 residues: Small ribosomal subunit protein uS7 (156 aa).

It belongs to the universal ribosomal protein uS7 family. As to quaternary structure, part of the 30S ribosomal subunit. Contacts proteins S9 and S11.

Functionally, one of the primary rRNA binding proteins, it binds directly to 16S rRNA where it nucleates assembly of the head domain of the 30S subunit. Is located at the subunit interface close to the decoding center, probably blocks exit of the E-site tRNA. This Tolumonas auensis (strain DSM 9187 / NBRC 110442 / TA 4) protein is Small ribosomal subunit protein uS7.